The following is a 600-amino-acid chain: Elongation factor 4 (600 aa).

The 182-residue stretch at 13 to 194 folds into the tr-type G domain; it reads DRIRNFCIIA…AIVERIPPPR (182 aa). Residues 25–30 and 141–144 contribute to the GTP site; these read DHGKST and NKID.

Belongs to the TRAFAC class translation factor GTPase superfamily. Classic translation factor GTPase family. LepA subfamily.

The protein localises to the cell membrane. It carries out the reaction GTP + H2O = GDP + phosphate + H(+). In terms of biological role, required for accurate and efficient protein synthesis under certain stress conditions. May act as a fidelity factor of the translation reaction, by catalyzing a one-codon backward translocation of tRNAs on improperly translocated ribosomes. Back-translocation proceeds from a post-translocation (POST) complex to a pre-translocation (PRE) complex, thus giving elongation factor G a second chance to translocate the tRNAs correctly. Binds to ribosomes in a GTP-dependent manner. The chain is Elongation factor 4 from Rubrobacter xylanophilus (strain DSM 9941 / JCM 11954 / NBRC 16129 / PRD-1).